The following is a 354-amino-acid chain: Polyribonucleotide 5'-hydroxyl-kinase PYRAB01840 (354 aa).

Position 36–43 (36–43) interacts with ATP; sequence GDVDTGKT.

A divalent metal cation is required as a cofactor.

The enzyme catalyses a 5'-end dephospho-2'-deoxyribonucleoside-DNA + ATP = a 5'-end 5'-phospho-2'-deoxyribonucleoside-DNA + ADP + H(+). It catalyses the reaction a 5'-end dephospho-ribonucleoside-RNA + ATP = a 5'-end 5'-phospho-ribonucleoside-RNA + ADP + H(+). In terms of biological role, polynucleotide kinase that can phosphorylate the 5'-hydroxyl groups of both single-stranded RNA (ssRNA) and single-stranded DNA (ssDNA). Exhibits a strong preference for ssRNA. This Pyrococcus abyssi (strain GE5 / Orsay) protein is Polyribonucleotide 5'-hydroxyl-kinase PYRAB01840.